A 282-amino-acid chain; its full sequence is 4-diphosphocytidyl-2-C-methyl-D-erythritol kinase (282 aa).

The active site involves K9. 98-108 (PMGGGLGGGSS) is a binding site for ATP. D140 is a catalytic residue.

This sequence belongs to the GHMP kinase family. IspE subfamily. Homodimer.

The catalysed reaction is 4-CDP-2-C-methyl-D-erythritol + ATP = 4-CDP-2-C-methyl-D-erythritol 2-phosphate + ADP + H(+). It functions in the pathway isoprenoid biosynthesis; isopentenyl diphosphate biosynthesis via DXP pathway; isopentenyl diphosphate from 1-deoxy-D-xylulose 5-phosphate: step 3/6. In terms of biological role, catalyzes the phosphorylation of the position 2 hydroxy group of 4-diphosphocytidyl-2C-methyl-D-erythritol. This is 4-diphosphocytidyl-2-C-methyl-D-erythritol kinase from Salmonella schwarzengrund (strain CVM19633).